The sequence spans 66 residues: DNA gyrase inhibitor YacG (66 aa).

The Zn(2+) site is built by C9, C12, C28, and C32. The interval 45–66 (HKIAGSQESEDELYSGDLEPRH) is disordered.

Belongs to the DNA gyrase inhibitor YacG family. Interacts with GyrB. It depends on Zn(2+) as a cofactor.

Its function is as follows. Inhibits all the catalytic activities of DNA gyrase by preventing its interaction with DNA. Acts by binding directly to the C-terminal domain of GyrB, which probably disrupts DNA binding by the gyrase. The chain is DNA gyrase inhibitor YacG from Pseudomonas putida (strain W619).